A 166-amino-acid polypeptide reads, in one-letter code: Interleukin-3 (166 aa).

Positions 1-27 (MVLASSTTSILCMLLPLLMLFHQGLQI) are cleaved as a signal peptide. Intrachain disulfides connect Cys-43-Cys-106 and Cys-105-Cys-166. Residues Asn-60 and Asn-70 are each glycosylated (N-linked (GlcNAc...) asparagine). A disordered region spans residues 145 to 166 (SVSRPPQPTSSSDNFRPMTVEC).

The protein belongs to the IL-3 family. In terms of assembly, monomer. In terms of tissue distribution, activated T-cells, mast cells, natural killer cells.

It is found in the secreted. In terms of biological role, cytokine secreted predominantly by activated T-lymphocytes as well as mast cells and osteoblastic cells that controls the production and differentiation of hematopoietic progenitor cells into lineage-restricted cells. Also stimulates mature basophils, eosinophils, and monocytes to become functionally activated. In addition, plays an important role in neural cell proliferation and survival. Participates as well in bone homeostasis and inhibits osteoclast differentiation by preventing NF-kappa-B nuclear translocation and activation. Mechanistically, exerts its biological effects through a receptor composed of IL3RA subunit and a signal transducing subunit IL3RB. Receptor stimulation results in the rapid activation of JAK2 kinase activity leading to STAT5-mediated transcriptional program. Alternatively, contributes to cell survival under oxidative stress in non-hematopoietic systems by activating pathways mediated by PI3K/AKT and ERK. The polypeptide is Interleukin-3 (Il3) (Rattus norvegicus (Rat)).